The sequence spans 258 residues: UPF0246 protein mma_1385 (258 aa).

It belongs to the UPF0246 family.

The protein is UPF0246 protein mma_1385 of Janthinobacterium sp. (strain Marseille) (Minibacterium massiliensis).